The primary structure comprises 672 residues: Acetoacetyl-CoA synthetase (672 aa).

The protein belongs to the ATP-dependent AMP-binding enzyme family.

Its subcellular location is the cytoplasm. It is found in the cytosol. It carries out the reaction acetoacetate + ATP + CoA = acetoacetyl-CoA + AMP + diphosphate. Its function is as follows. Activates acetoacetate to acetoacetyl-CoA. The sequence is that of Acetoacetyl-CoA synthetase (aacs) from Xenopus tropicalis (Western clawed frog).